The sequence spans 185 residues: Ubiquitin-fold modifier-conjugating enzyme 1 (185 aa).

Cys119 (glycyl thioester intermediate) is an active-site residue.

This sequence belongs to the ubiquitin-conjugating enzyme family. UFC1 subfamily.

In terms of biological role, E2-like enzyme which forms an intermediate with UFM1 via a thioester linkage. The chain is Ubiquitin-fold modifier-conjugating enzyme 1 from Oryza sativa subsp. japonica (Rice).